Reading from the N-terminus, the 488-residue chain is H2.0-like homeobox protein (488 aa).

2 disordered regions span residues alanine 118–aspartate 173 and tryptophan 331–leucine 488. 2 stretches are compositionally biased toward low complexity: residues glutamine 125 to glutamine 135 and proline 158 to serine 171. A DNA-binding region (homeobox) is located at residues arginine 276–lysine 335. 2 stretches are compositionally biased toward basic and acidic residues: residues serine 334–glutamate 349 and aspartate 363–glycine 372. The span at glutamate 373–serine 383 shows a compositional bias: acidic residues. Residues aspartate 390–leucine 401 show a composition bias toward basic and acidic residues. The span at glycine 422–asparagine 432 shows a compositional bias: gly residues. The span at serine 433–serine 454 shows a compositional bias: low complexity.

The protein belongs to the H2.0 homeobox family. As to expression, low level in normal B and T-cells, high level in activated lymphocytes and monocytes. Also found in thymus, tonsil, bone marrow, developing vessels, and fetal brain.

It is found in the nucleus. Transcription factor required for TBX21/T-bet-dependent maturation of Th1 cells as well as maintenance of Th1-specific gene expression. Involved in embryogenesis and hematopoiesis. The protein is H2.0-like homeobox protein (HLX) of Homo sapiens (Human).